The chain runs to 89 residues: Ubiquinol-cytochrome-c reductase complex assembly factor 3 (89 aa).

At 1 to 7 (MEVARKA) the chain is on the mitochondrial matrix side. The helical transmembrane segment at 8–28 (LVAVAVLGGGAGVGSILFALV) threads the bilayer. The mediates lipid-binding stretch occupies residues 23–80 (ILFALVTPGELQKQSMLQEMPERDSRRRDEAVRTTELVMATLKDAAATKENVAWRRNW). The Mitochondrial intermembrane segment spans residues 29 to 89 (TPGELQKQSM…WTVSGDGRSA (61 aa)).

It belongs to the UQCC3 family. As to quaternary structure, associates with the ubiquinol-cytochrome c reductase complex (mitochondrial respiratory chain complex III(CIII) or cytochrome b-c1 complex). Interacts with UQCC1. Forms a complex, named COMC, composed of UQCC1, UQCC2; UQCC3 and UQCC4; mediates MT-CYB hemylation and association with the first nuclear-encoded complex III subunit UQCRQ. In terms of processing, probably cleaved by OMA1 under mitochondrial stress conditions.

Its subcellular location is the mitochondrion inner membrane. Functionally, required for the assembly of the ubiquinol-cytochrome c reductase complex (mitochondrial respiratory chain complex III or cytochrome b-c1 complex), mediating cytochrome b recruitment and probably stabilization within the complex. Thereby, plays an important role in ATP production by mitochondria. Cardiolipin-binding protein, it may also control the cardiolipin composition of mitochondria membranes and their morphology. This Mus musculus (Mouse) protein is Ubiquinol-cytochrome-c reductase complex assembly factor 3.